A 457-amino-acid polypeptide reads, in one-letter code: MTVTVRFAPSPTGYIHIGNTRTALSNWLYASKNNGKFILRYDDTDVERSKDEYAQAIAVDLDWLGVRPDRVEYQSKRFDIYAKAVEKLKTAGLLYACYETADELERRRKLRLARRLPPVYGREALKLTDAEKAALEAEGRKPHWRFLLPNFESDPFATQRTEVHWDDLVRGPQTVDLASMSDPILVREDGTYLYTLPSVVDDIDMGVTHIIRGDDHVTNTGVQISIFKALGATPPVFGHHNLLTTISGEGLSKRTGALSVGSLREAGYEPMAVASLAILIGTSESVTAAPDMAALAEHFDLASISKSSAKFDPSELDALNRSLLHEMPFEKAKPRLEALGICGAKAESFWLAVRGNLDRFSDVSDWWQVVSGDLPEAPDLSGEDRDFVRHAFDLLPPEPWNGQTWKSWTEAVKSATGRKGKNLFMPLRLALTGQAHGPELADLLVLVGLERTKSRRP.

The 'HIGH' region signature appears at 9–19; the sequence is PSPTGYIHIGN. The 'KMSKS' region motif lies at 250 to 254; that stretch reads GLSKR. Lys-253 lines the ATP pocket.

It belongs to the class-I aminoacyl-tRNA synthetase family. Glutamate--tRNA ligase type 1 subfamily. As to quaternary structure, monomer.

It is found in the cytoplasm. It carries out the reaction tRNA(Glu) + L-glutamate + ATP = L-glutamyl-tRNA(Glu) + AMP + diphosphate. Functionally, catalyzes the attachment of glutamate to tRNA(Glu) in a two-step reaction: glutamate is first activated by ATP to form Glu-AMP and then transferred to the acceptor end of tRNA(Glu). This chain is Glutamate--tRNA ligase 1, found in Brucella canis (strain ATCC 23365 / NCTC 10854 / RM-666).